We begin with the raw amino-acid sequence, 126 residues long: uncharacterized protein (126 aa).

Residues M1–R46 are disordered.

The protein localises to the cytoplasm. The protein resides in the cytoskeleton. It localises to the cilium basal body. This is an uncharacterized protein from Bos taurus (Bovine).